Reading from the N-terminus, the 753-residue chain is Polyribonucleotide nucleotidyltransferase (753 aa).

Mg(2+) is bound by residues Asp-488 and Asp-494. In terms of domain architecture, KH spans 555–614 (PRLLRTKISPDKIGALIGPGGKNIRGIQETTGAVIEVDDEGTVLVASSNKESAQEAMRQV). The region spanning 624–692 (GKIYDGTVSS…EHDRVKLSRR (69 aa)) is the S1 motif domain. The segment covering 698–719 (LGEEDPLAVEGEGGGDSEGGGD) has biased composition (acidic residues). Residues 698 to 753 (LGEEDPLAVEGEGGGDSEGGGDGEDRPRRRRGGSGGGGGGGRGRGPRRSGGGRDRD) form a disordered region. A compositionally biased stretch (gly residues) spans 730–740 (GSGGGGGGGRG).

This sequence belongs to the polyribonucleotide nucleotidyltransferase family. It depends on Mg(2+) as a cofactor.

The protein resides in the cytoplasm. It catalyses the reaction RNA(n+1) + phosphate = RNA(n) + a ribonucleoside 5'-diphosphate. Functionally, involved in mRNA degradation. Catalyzes the phosphorolysis of single-stranded polyribonucleotides processively in the 3'- to 5'-direction. The sequence is that of Polyribonucleotide nucleotidyltransferase from Rhodopirellula baltica (strain DSM 10527 / NCIMB 13988 / SH1).